A 356-amino-acid chain; its full sequence is sn-glycerol-3-phosphate import ATP-binding protein UgpC (356 aa).

Residues 4–235 (LKLQAVTKSW…PASLFVASFI (232 aa)) enclose the ABC transporter domain. 37-44 (GPSGCGKS) serves as a coordination point for ATP.

This sequence belongs to the ABC transporter superfamily. sn-glycerol-3-phosphate importer (TC 3.A.1.1.3) family. As to quaternary structure, the complex is composed of two ATP-binding proteins (UgpC), two transmembrane proteins (UgpA and UgpE) and a solute-binding protein (UgpB).

The protein resides in the cell inner membrane. The catalysed reaction is sn-glycerol 3-phosphate(out) + ATP + H2O = sn-glycerol 3-phosphate(in) + ADP + phosphate + H(+). In terms of biological role, part of the ABC transporter complex UgpBAEC involved in sn-glycerol-3-phosphate (G3P) import. Responsible for energy coupling to the transport system. This chain is sn-glycerol-3-phosphate import ATP-binding protein UgpC, found in Shigella sonnei (strain Ss046).